The sequence spans 460 residues: ATP synthase subunit beta (460 aa).

150-157 (GGAGVGKT) lines the ATP pocket.

This sequence belongs to the ATPase alpha/beta chains family. F-type ATPases have 2 components, CF(1) - the catalytic core - and CF(0) - the membrane proton channel. CF(1) has five subunits: alpha(3), beta(3), gamma(1), delta(1), epsilon(1). CF(0) has three main subunits: a(1), b(2) and c(9-12). The alpha and beta chains form an alternating ring which encloses part of the gamma chain. CF(1) is attached to CF(0) by a central stalk formed by the gamma and epsilon chains, while a peripheral stalk is formed by the delta and b chains.

It localises to the cell inner membrane. It carries out the reaction ATP + H2O + 4 H(+)(in) = ADP + phosphate + 5 H(+)(out). Functionally, produces ATP from ADP in the presence of a proton gradient across the membrane. The catalytic sites are hosted primarily by the beta subunits. This is ATP synthase subunit beta from Yersinia enterocolitica serotype O:8 / biotype 1B (strain NCTC 13174 / 8081).